A 596-amino-acid chain; its full sequence is Cytochrome P450 monooxygenase FUM15 (596 aa).

Residues 476–512 (DRWLSPKNGNREATEQSKFKIGNQKRDSTAAPEVTQE) are disordered. Over residues 484–503 (GNREATEQSKFKIGNQKRDS) the composition is skewed to basic and acidic residues. C536 provides a ligand contact to heme.

The protein belongs to the cytochrome P450 family. It depends on heme as a cofactor.

It is found in the endoplasmic reticulum. Its pathway is secondary metabolite biosynthesis. Cytochrome P450 monooxygenase; part of the gene cluster that mediates the biosynthesis of fumonisins B1 (FB1), B2 (FB2), B3 (FB3), and B4 (FB4), which are carcinogenic mycotoxins. Within the pathway, FUM15 may be responsible for the hydroxylations at positions C-14 and/or C-15. Also plays a role in self-protection from FB1 toxicity, probably through derivatization of FB1, and may contribute to ceramide biosynthesis. The biosynthesis starts with the FUM1-catalyzed carbon chain assembly from one molecule of acetyl-CoA, eight molecules of malonyl-CoA, and two molecules of methionine (in S-adenosyl form). The C18 polyketide chain is released from the enzyme by a nucleophilic attack of a carbanion, which is derived from R-carbon of alanine by decarboxylation, on the carbonyl carbon of polyketide acyl chain. This step is catalyzed by the pyridoxal 5'-phosphate-dependent aminoacyl transferase FUM8. The resultant 3-keto intermediate is then stereospecifically reduced to a 3-hydroxyl product by reductase FUM13. Subsequent oxidations at C-10 by the cytochrome P450 monooxygenase FUM2, C-14 and C-15 by FUM6, FUM12 or FUM15, tricarballylic esterification of the hydroxyl groups on C-14 and C-15 by acyltransferase FUM14, and C-5 hydroxylation by 2-keto-glutarate-dependent dioxygenase FUM3 furnish the biosynthesis of fumonisins. The tricarballylic moieties are most likely derived from the citric acid cycle, and their addition to the carbon backbone may involve FUM7, FUM10, FUM11 and FUM14. The protein is Cytochrome P450 monooxygenase FUM15 of Gibberella moniliformis (strain M3125 / FGSC 7600) (Maize ear and stalk rot fungus).